The primary structure comprises 420 residues: Torsin-4A-A (420 aa).

Residues 130-150 (CLLLFIGIVCFQILNAIENLD) form a helical membrane-spanning segment. ATP is bound at residue 202 to 209 (GPSGVGKS).

It belongs to the ClpA/ClpB family. Torsin subfamily.

The protein localises to the membrane. The chain is Torsin-4A-A (tor4a-a) from Xenopus laevis (African clawed frog).